The primary structure comprises 645 residues: Acetyl-coenzyme A synthetase 2 (645 aa).

CoA is bound by residues 190–193 (RGGK), T308, and N332. Residues 384–386 (GEP), 408–413 (DTWWQT), D497, and R512 contribute to the ATP site. CoA is bound at residue S520. R523 is a binding site for ATP. Residues V534, H536, and V539 each contribute to the Mg(2+) site. The residue at position 606 (K606) is an N6-acetyllysine.

The protein belongs to the ATP-dependent AMP-binding enzyme family. Mg(2+) is required as a cofactor. In terms of processing, acetylated. Deacetylation by the SIR2-homolog deacetylase activates the enzyme.

It carries out the reaction acetate + ATP + CoA = acetyl-CoA + AMP + diphosphate. Catalyzes the conversion of acetate into acetyl-CoA (AcCoA), an essential intermediate at the junction of anabolic and catabolic pathways. AcsA undergoes a two-step reaction. In the first half reaction, AcsA combines acetate with ATP to form acetyl-adenylate (AcAMP) intermediate. In the second half reaction, it can then transfer the acetyl group from AcAMP to the sulfhydryl group of CoA, forming the product AcCoA. The polypeptide is Acetyl-coenzyme A synthetase 2 (Pseudomonas aeruginosa (strain ATCC 15692 / DSM 22644 / CIP 104116 / JCM 14847 / LMG 12228 / 1C / PRS 101 / PAO1)).